The sequence spans 69 residues: Cytochrome c oxidase subunit 8A, mitochondrial (69 aa).

A mitochondrion-targeting transit peptide spans 1–25; sequence MSVLTSLLLRGLTGSARWLPVPRAK. The short motif at 2 to 19 is the SIFI-degron element; that stretch reads SVLTSLLLRGLTGSARWL. Residues 26-36 are Mitochondrial matrix-facing; it reads VHSMPPEVELG. A helical membrane pass occupies residues 37 to 60; that stretch reads IMEKAIGLTSCFVSLFLPAGWILS. Residues 61–69 lie on the Mitochondrial intermembrane side of the membrane; the sequence is HLEDYKRPE.

It belongs to the cytochrome c oxidase VIII family. Component of the cytochrome c oxidase (complex IV, CIV), a multisubunit enzyme composed of 14 subunits. The complex is composed of a catalytic core of 3 subunits MT-CO1, MT-CO2 and MT-CO3, encoded in the mitochondrial DNA, and 11 supernumerary subunits COX4I, COX5A, COX5B, COX6A, COX6B, COX6C, COX7A, COX7B, COX7C, COX8 and NDUFA4, which are encoded in the nuclear genome. The complex exists as a monomer or a dimer and forms supercomplexes (SCs) in the inner mitochondrial membrane with NADH-ubiquinone oxidoreductase (complex I, CI) and ubiquinol-cytochrome c oxidoreductase (cytochrome b-c1 complex, complex III, CIII), resulting in different assemblies (supercomplex SCI(1)III(2)IV(1) and megacomplex MCI(2)III(2)IV(2)). Post-translationally, in response to mitochondrial stress, the precursor protein is ubiquitinated by the SIFI complex in the cytoplasm before mitochondrial import, leading to its degradation. Within the SIFI complex, UBR4 initiates ubiquitin chain that are further elongated or branched by KCMF1.

It localises to the mitochondrion inner membrane. It functions in the pathway energy metabolism; oxidative phosphorylation. Functionally, component of the cytochrome c oxidase, the last enzyme in the mitochondrial electron transport chain which drives oxidative phosphorylation. The respiratory chain contains 3 multisubunit complexes succinate dehydrogenase (complex II, CII), ubiquinol-cytochrome c oxidoreductase (cytochrome b-c1 complex, complex III, CIII) and cytochrome c oxidase (complex IV, CIV), that cooperate to transfer electrons derived from NADH and succinate to molecular oxygen, creating an electrochemical gradient over the inner membrane that drives transmembrane transport and the ATP synthase. Cytochrome c oxidase is the component of the respiratory chain that catalyzes the reduction of oxygen to water. Electrons originating from reduced cytochrome c in the intermembrane space (IMS) are transferred via the dinuclear copper A center (CU(A)) of subunit 2 and heme A of subunit 1 to the active site in subunit 1, a binuclear center (BNC) formed by heme A3 and copper B (CU(B)). The BNC reduces molecular oxygen to 2 water molecules using 4 electrons from cytochrome c in the IMS and 4 protons from the mitochondrial matrix. The chain is Cytochrome c oxidase subunit 8A, mitochondrial (COX8A) from Macaca silenus (Lion-tailed macaque).